The primary structure comprises 161 residues: Anaerobic nitrite reductase Hb2 (161 aa).

One can recognise a Globin domain in the interval G8–K157. Residues E41 to S45 carry the Homodimerization motif. Residues S51, K65, H69, K99, T103, and H104 each coordinate heme b. A Homodimerization motif is present at residues N111–E123.

This sequence belongs to the plant globin family. Homodimer. The cofactor is heme b. As to expression, predominantly expressed in roots, cotyledons, stems and nodules (confined to some cells associated with the nitrogen-fixing Bradyrhizobium symbiont), and, to a lower extent, in flowers, young leaves, pods and seeds.

It is found in the cytoplasm. It localises to the nucleus. It carries out the reaction Fe(III)-heme b-[protein] + nitric oxide + H2O = Fe(II)-heme b-[protein] + nitrite + 2 H(+). In terms of biological role, phytoglobin that reduces nitrite to nitric oxide (NO) under anoxic conditions (e.g. during flooding or in waterlogged soil) and upon root nodulation. Required for general plant development and during nodulation, especially for the onset of symbiosis. Monitors nitric oxide (NO) levels during early phase of the nitrogen-fixing symbiosis and buffers oxygen in functioning nodules. May not function as an oxygen storage or transport protein. Has an unusually high affinity for O(2) through a hexacoordinate heme iron because of a very low dissociation constant. Involved in water stress tolerance. This chain is Anaerobic nitrite reductase Hb2, found in Glycine max (Soybean).